The primary structure comprises 416 residues: Gamma-glutamyl phosphate reductase (416 aa).

The protein belongs to the gamma-glutamyl phosphate reductase family.

It is found in the cytoplasm. The catalysed reaction is L-glutamate 5-semialdehyde + phosphate + NADP(+) = L-glutamyl 5-phosphate + NADPH + H(+). It participates in amino-acid biosynthesis; L-proline biosynthesis; L-glutamate 5-semialdehyde from L-glutamate: step 2/2. Its function is as follows. Catalyzes the NADPH-dependent reduction of L-glutamate 5-phosphate into L-glutamate 5-semialdehyde and phosphate. The product spontaneously undergoes cyclization to form 1-pyrroline-5-carboxylate. The chain is Gamma-glutamyl phosphate reductase from Salmonella paratyphi C (strain RKS4594).